A 388-amino-acid chain; its full sequence is Oxytocin receptor (388 aa).

Over 1-38 the chain is Extracellular; that stretch reads MEGTPAANWSIELDLGSGVPPGAEGNLTAGPPRRNEAL. N-linked (GlcNAc...) asparagine glycosylation is found at asparagine 8 and asparagine 26. A helical membrane pass occupies residues 39 to 63; it reads ARVEVAVLCLILFLALSGNACVLLA. Topologically, residues 64 to 74 are cytoplasmic; it reads LRTTRHKHSRL. Residues 75–97 form a helical membrane-spanning segment; sequence FFFMKHLSIADLVVAVFQVLPQL. Over 98–113 the chain is Extracellular; the sequence is LWDITFRFYGPDLLCR. A disulfide bridge connects residues cysteine 112 and cysteine 187. A helical membrane pass occupies residues 114 to 135; it reads LVKYLQVVGMFASTYLLLLMSL. Over 136-154 the chain is Cytoplasmic; sequence DRCLAICQPLRSLRRRTDR. Residues 155–175 traverse the membrane as a helical segment; sequence LAVLATWLGCLVASVPQVHIF. Topologically, residues 176-202 are extracellular; sequence SLREVADGVFDCWAVFIQPWGPKAYVT. The chain crosses the membrane as a helical span at residues 203–225; that stretch reads WITLAVYIVPVIVLAACYGLISF. Residues 226–274 are Cytoplasmic-facing; it reads KIWQNLRLKTAAAAAAAEGSDAAGGAGRAALARVSSVKLISKAKIRTVK. Residues 275 to 293 traverse the membrane as a helical segment; it reads MTFIIVLAFIVCWTPFFFV. Topologically, residues 294–308 are extracellular; the sequence is QMWSVWDVNAPKEAS. Residues 309–331 traverse the membrane as a helical segment; sequence AFIIAMLLASLNSCCNPWIYMLF. Over 332 to 388 the chain is Cytoplasmic; the sequence is TGHLFHELVQRFLCCSARYLKGSRPGETSISKKSNSSTFVLSRRSSSQRSCSQPSSA. The tract at residues 354–388 is disordered; that stretch reads SRPGETSISKKSNSSTFVLSRRSSSQRSCSQPSSA. Phosphoserine is present on residues serine 365 and serine 367. A compositionally biased stretch (low complexity) spans 365–388; that stretch reads SNSSTFVLSRRSSSQRSCSQPSSA.

It belongs to the G-protein coupled receptor 1 family. Vasopressin/oxytocin receptor subfamily.

It localises to the cell membrane. Receptor for oxytocin. The activity of this receptor is mediated by G proteins which activate a phosphatidylinositol-calcium second messenger system. The protein is Oxytocin receptor (Oxtr) of Mus musculus (Mouse).